A 93-amino-acid polypeptide reads, in one-letter code: U11-ctenitoxin-Pn1a (93 aa).

Residues 1–21 (MKCAVLFLSVIALVHIFVVEA) form the signal peptide. Positions 22–34 (EEEPDSDALVPQE) are excised as a propeptide. Disulfide bonds link Cys-37-Cys-51, Cys-44-Cys-57, Cys-50-Cys-75, Cys-59-Cys-73, and Cys-83-Cys-90.

Belongs to the neurotoxin 09 (Tx3-6) family. In terms of tissue distribution, expressed by the venom gland.

It localises to the secreted. Its function is as follows. Probable neurotoxin. In Phoneutria nigriventer (Brazilian armed spider), this protein is U11-ctenitoxin-Pn1a.